The primary structure comprises 452 residues: Probable ECA polymerase (452 aa).

A run of 11 helical transmembrane segments spans residues 6-26 (FSGL…LTWF), 37-57 (VFFS…TSVL), 63-83 (VGVA…CFYG), 118-138 (VILM…NGFL), 155-175 (GVAL…VYFL), 181-201 (AWLF…MIVG), 207-227 (IIIA…ISLW), 228-248 (MLAA…LKRY), 341-361 (LVVM…GLII), 378-398 (YKAA…IVLA), and 410-430 (VFFL…FWLF).

Belongs to the WzyE family. As to quaternary structure, probably part of a complex composed of WzxE, WzyE and WzzE.

The protein localises to the cell inner membrane. The protein operates within bacterial outer membrane biogenesis; enterobacterial common antigen biosynthesis. Probably involved in the polymerization of enterobacterial common antigen (ECA) trisaccharide repeat units. The chain is Probable ECA polymerase from Salmonella choleraesuis (strain SC-B67).